A 331-amino-acid chain; its full sequence is Putative T-box protein 36 (331 aa).

The segment at residues 29–210 (EITKKQWNQL…MNRFSRKRKY (182 aa)) is a DNA-binding region (T-box).

The protein localises to the nucleus. In Caenorhabditis elegans, this protein is Putative T-box protein 36 (tbx-36).